A 250-amino-acid polypeptide reads, in one-letter code: MQKKSIIIPALDLIDGNVVRLHQGDYAKQTTYSDNPIEQFANYLAQGAEQLHLVDLTGAKYPAKRQTALIGKIIAETNCQIQVGGGIRTEQDVADLLAVGANRVVIGSTAVKDRAMVKGWFEKYGAEKFVLALDVNIDASGQKIIAISGWQEASGVSLEELIEDYQVVGLQHVLCTDISRDGTLAGSNVNLYREICAKYPKIHFQSSGGIGSLDDIKALKGTGVSGVIVGRALLEGKFNVAEAIECWQNG.

Aspartate 12 (proton acceptor) is an active-site residue. Aspartate 134 functions as the Proton donor in the catalytic mechanism.

This sequence belongs to the HisA/HisF family.

The protein localises to the cytoplasm. The enzyme catalyses 1-(5-phospho-beta-D-ribosyl)-5-[(5-phospho-beta-D-ribosylamino)methylideneamino]imidazole-4-carboxamide = 5-[(5-phospho-1-deoxy-D-ribulos-1-ylimino)methylamino]-1-(5-phospho-beta-D-ribosyl)imidazole-4-carboxamide. It functions in the pathway amino-acid biosynthesis; L-histidine biosynthesis; L-histidine from 5-phospho-alpha-D-ribose 1-diphosphate: step 4/9. In Actinobacillus pleuropneumoniae serotype 5b (strain L20), this protein is 1-(5-phosphoribosyl)-5-[(5-phosphoribosylamino)methylideneamino] imidazole-4-carboxamide isomerase.